The sequence spans 427 residues: Thymidine phosphorylase (427 aa).

This sequence belongs to the thymidine/pyrimidine-nucleoside phosphorylase family. As to quaternary structure, homodimer.

The enzyme catalyses thymidine + phosphate = 2-deoxy-alpha-D-ribose 1-phosphate + thymine. Its function is as follows. The enzymes which catalyze the reversible phosphorolysis of pyrimidine nucleosides are involved in the degradation of these compounds and in their utilization as carbon and energy sources, or in the rescue of pyrimidine bases for nucleotide synthesis. This chain is Thymidine phosphorylase (deoA), found in Mycobacterium tuberculosis (strain CDC 1551 / Oshkosh).